The chain runs to 733 residues: Two pore calcium channel protein 1 (733 aa).

Met-1 is modified (N-acetylmethionine). Over 1-71 the chain is Cytoplasmic; sequence MEDPLIGRDS…RYYFIFTRLD (71 aa). A helical membrane pass occupies residues 72–92; it reads LIWSLNYFALLFLNFFEQPLW. Residues 93-120 lie on the Vacuolar side of the membrane; sequence CEKNPKPSCKDRDYYYLGELPYLTNAES. A helical membrane pass occupies residues 121 to 141; it reads IIYEVITLAILLVHTFFPISY. At 142–158 the chain is on the cytoplasmic side; it reads EGSRIFWTSRLNLVKVA. A helical membrane pass occupies residues 159 to 179; that stretch reads CVVILFVDVLVDFLYLSPLAF. A topological domain (vacuolar) is located at residue Asp-180. Residues 181–199 traverse the membrane as a helical; Voltage-sensor segment; the sequence is FLPFRIAPYVRVIIFILSI. The Cytoplasmic segment spans residues 200-218; the sequence is RELRDTLVLLSGMLGTYLN. A helical membrane pass occupies residues 219 to 239; the sequence is ILALWMLFLLFASWIAFVMFE. Residues 240–245 lie on the Vacuolar side of the membrane; the sequence is DTQQGL. An intramembrane region (pore-forming) is located at residues 246-260; that stretch reads TVFTSYGATLYQMFI. The Vacuolar segment spans residues 261–282; that stretch reads LFTTSNNPDVWIPAYKSSRWSS. Residues 283–303 traverse the membrane as a helical segment; it reads VFFVLYVLIGVYFVTNLILAV. Residues 304–428 are Cytoplasmic-facing; the sequence is VYDSFKEQLA…LSQQLRAFVR (125 aa). 2 consecutive EF-hand domains span residues 322–357 and 363–398; these read MKRR…LTNY and ISKE…IALR. The chain crosses the membrane as a helical span at residues 429–449; that stretch reads SPNFGYAISFILIINFIAVVV. Topologically, residues 450 to 465 are vacuolar; it reads ETTLDIEESSAQKPWQ. A helical transmembrane segment spans residues 466–486; that stretch reads VAEFVFGWIYVLEMALKIYTY. Over 487–498 the chain is Cytoplasmic; the sequence is GFENYWREGANR. A helical transmembrane segment spans residues 499 to 519; sequence FDFLVTWVIVIGETATFITPD. Residues 520–528 lie on the Vacuolar side of the membrane; it reads ENTFFSNGE. The helical; Voltage-sensor transmembrane segment at 529–546 threads the bilayer; the sequence is WIRYLLLARMLRLIRLLM. Residues 547–557 are Cytoplasmic-facing; sequence NVQRYRAFIAT. A helical transmembrane segment spans residues 558 to 578; that stretch reads FITLIPSLMPYLGTIFCVLCI. Over 579–615 the chain is Vacuolar; sequence YCSIGVQVFGGLVNAGNKKLFETELAEDDYLLFNFND. Positions 616–630 form an intramembrane region, pore-forming; it reads YPNGMVTLFNLLVMG. Residues 631-651 lie on the Vacuolar side of the membrane; sequence NWQVWMESYKDLTGTWWSITY. The helical transmembrane segment at 652–672 threads the bilayer; the sequence is FVSFYVITILLLLNLVVAFVL. The Cytoplasmic portion of the chain corresponds to 673 to 733; it reads EAFFTELDLE…SKPECSTSDT (61 aa). The span at 686–695 shows a compositional bias: basic and acidic residues; sequence KCQGQDSQEK. Residues 686–711 form a disordered region; it reads KCQGQDSQEKRNRRRSAGSKSRSQRV.

Belongs to the calcium channel alpha-1 subunit (TC 1.A.1.11) family. Two pore calcium channel subfamily. As to quaternary structure, homodimer. As to expression, ubiquitously expressed.

It is found in the vacuole membrane. With respect to regulation, inhibited by Al(3+). Functions as a voltage-gated inward-rectifying Ca(2+) channel (VDCC) across the vacuole membrane. Is one of the essential components of the slow vacuolar (SV) channel. Acts as the major ROS-responsive Ca(2+) channel and is the possible target of Al-dependent inhibition. Involved in the regulation of germination and stomatal movement. In Arabidopsis thaliana (Mouse-ear cress), this protein is Two pore calcium channel protein 1 (TPC1).